The primary structure comprises 356 residues: Protein SEC13 homolog (356 aa).

6 WD repeats span residues 11-50, 54-95, 101-142, 149-205, 210-253, and 259-298; these read EHEDMVHHAALDFYGLLLATCSSDGSVRIFHSRKNNKALA, GHQG…DWTK, NHDS…GVWD, AHTI…WVEE, AHSD…SEWT, and TFDDAVWSISWSTTGNILAVTGGDNNVTLWKENTEGQWIR. A disordered region spans residues 307–356; sequence IQSKQPSHLPHSHSQQQQALQQHQQQAPSHPGPSSDSEHSSNLSNSQLSN. A compositionally biased stretch (low complexity) spans 308 to 356; sequence QSKQPSHLPHSHSQQQQALQQHQQQAPSHPGPSSDSEHSSNLSNSQLSN.

This sequence belongs to the WD repeat SEC13 family. Probable component of the nuclear pore complex (NPC). Component of the GATOR complex consisting of mio, Nup44A/Seh1, Im11, Nplr3, Nplr2, Wdr24, Wdr59 and Sec13. Within the GATOR complex, probable component of the GATOR2 subcomplex which is likely composed of mio, Nup44A/Seh1, Wdr24, Wdr59 and Sec13. Interacts with msk. Interacts (preferentially when phosphorylated) with Mad. The GATOR2 complex associates with unmet in the absence of S-adenosyl-L-methionine; the mio-Wdr24-Nup44A subcomplex is essential and sufficient for this interaction while Wdr59 and Sec13 are dispensable. This association acts as a nutrient sensor to inhibit mTORC1 signaling in the absence of methionine. In terms of tissue distribution, salivary glands.

Its subcellular location is the nucleus envelope. It is found in the nucleus. It localises to the nucleoplasm. The protein localises to the cytoplasm. The protein resides in the cytoskeleton. Its subcellular location is the microtubule organizing center. It is found in the centrosome. It localises to the nuclear pore complex. The protein localises to the cytoplasmic vesicle. The protein resides in the COPII-coated vesicle membrane. Its subcellular location is the endoplasmic reticulum membrane. It is found in the lysosome membrane. In terms of biological role, functions as a component of the nuclear pore complex (NPC) and the COPII coat. At the endoplasmic reticulum, SEC13 is involved in the biogenesis of COPII-coated vesicles. Recruited to transcriptionally active chromatin at the time of transcription initiation by RNA polymerase II. Required for proper expression of ecdysone-responsive genes such as Eip74EF and Eip75B during larval development. Required for reactivation of transcription after heat shock. Required for nuclear import of phosphorylated Mad via importin msk. Has no role in classical nuclear localization signal (cNLS)-dependent nuclear import via importin-beta. Its function is as follows. A component of the GATOR subcomplex GATOR2 which functions as an activator of the amino acid-sensing branch of the mTORC1 signaling pathway. The two GATOR subcomplexes, GATOR1 and GATOR2, regulate the mTORC1 pathway in order to mediate metabolic homeostasis, female gametogenesis and the response to amino acid limitation and complete starvation. GATOR2 activates the mTORC1 signaling pathway through the inhibition of the GATOR1 subcomplex, controlling the switch to cell proliferation and growth under nutrient replete conditions and during female oocyte development. The sequence is that of Protein SEC13 homolog from Drosophila melanogaster (Fruit fly).